We begin with the raw amino-acid sequence, 612 residues long: Actin-binding LIM protein 2 (612 aa).

4 consecutive LIM zinc-binding domains span residues 22–81, 81–141, 151–210, and 210–270; these read ILCN…LYGT, TRCF…TLVG, RSCG…KFGI, and IRCD…ARTE. The Zn(2+) site is built by Cys83, Cys86, His103, Cys106, Cys109, Cys112, Cys131, and Cys134. Cys212, Cys215, His232, Cys235, Cys238, Cys241, His260, and Cys263 together coordinate Zn(2+). Basic and acidic residues predominate over residues 269–278; that stretch reads TEDKSKETRT. 2 disordered regions span residues 269–295 and 341–433; these read TEDK…SGSP and AVGD…DNIY. Low complexity-rich tracts occupy residues 279 to 295 and 364 to 373; these read SSES…SGSP and SSPSSAGSVS. Ser282, Ser294, Ser365, and Ser368 each carry phosphoserine. The segment covering 394–416 has biased composition (polar residues); sequence SGRSTPSLSVHSDSRPPSSTYQQ. The residue at position 453 (Ser453) is a Phosphoserine. The interval 471-520 is disordered; sequence ADTRTNSPDLDSQSLSLSSGADQEPLQRMPGDSLYSRFPYSKPDTLPGPR. At Thr473 the chain carries Phosphothreonine. A phosphoserine mark is found at Ser477 and Ser579. Residues 477–489 are compositionally biased toward low complexity; it reads SPDLDSQSLSLSS. The region spanning 544 to 612 is the HP domain; sequence TREYKIYPYD…NDLKKKALLF (69 aa).

In terms of assembly, interacts with F-actin and ABRA.

It localises to the cytoplasm. Functionally, may act as scaffold protein. May stimulate ABRA activity and ABRA-dependent SRF transcriptional activity. This is Actin-binding LIM protein 2 (Ablim2) from Rattus norvegicus (Rat).